A 383-amino-acid chain; its full sequence is ATP phosphoribosyltransferase regulatory subunit (383 aa).

This sequence belongs to the class-II aminoacyl-tRNA synthetase family. HisZ subfamily. As to quaternary structure, heteromultimer composed of HisG and HisZ subunits.

Its subcellular location is the cytoplasm. The protein operates within amino-acid biosynthesis; L-histidine biosynthesis; L-histidine from 5-phospho-alpha-D-ribose 1-diphosphate: step 1/9. Required for the first step of histidine biosynthesis. May allow the feedback regulation of ATP phosphoribosyltransferase activity by histidine. This chain is ATP phosphoribosyltransferase regulatory subunit, found in Cupriavidus metallidurans (strain ATCC 43123 / DSM 2839 / NBRC 102507 / CH34) (Ralstonia metallidurans).